Here is a 391-residue protein sequence, read N- to C-terminus: MKCVVFTGGGTGGHIFPGLAVAEALSSSLECRIVWIGSAKGVDRKIVESSELYSASPSVLEFIGIPAGKLRRYFSFQNFIDVFKVAAGFIKSFFILLKLKPVFVFSKGGFVSVPPCAAAKFLKIPVITHECDFSPGLATRINSKFANRILVSYQETAELLPASLRSKVICTGNPVRLSFYSGRPEKGRSFLNIKSNLPVLFVLGGSLGARQLNDLISDSIEYLVKHFVVVHQIGEANMDQGQKIKEGLLKSSPEFAENYKPYPFIKKEMADVLSLSSIVVSRAGANTVWESAAAGKPMILVPLEKGSSRGDQIENAEFFKKKGSAEILLGEDVRPDIFIRLLRDLGFEENISGNERLKNMAQASAALAGEKPALVIADFLKSFFTSKNEDL.

UDP-N-acetyl-alpha-D-glucosamine contacts are provided by residues 11 to 13, Arg176, Ser206, and Gln312; that span reads TGG.

It belongs to the glycosyltransferase 28 family. MurG subfamily.

It is found in the cell inner membrane. It catalyses the reaction di-trans,octa-cis-undecaprenyl diphospho-N-acetyl-alpha-D-muramoyl-L-alanyl-D-glutamyl-meso-2,6-diaminopimeloyl-D-alanyl-D-alanine + UDP-N-acetyl-alpha-D-glucosamine = di-trans,octa-cis-undecaprenyl diphospho-[N-acetyl-alpha-D-glucosaminyl-(1-&gt;4)]-N-acetyl-alpha-D-muramoyl-L-alanyl-D-glutamyl-meso-2,6-diaminopimeloyl-D-alanyl-D-alanine + UDP + H(+). It functions in the pathway cell wall biogenesis; peptidoglycan biosynthesis. Its function is as follows. Cell wall formation. Catalyzes the transfer of a GlcNAc subunit on undecaprenyl-pyrophosphoryl-MurNAc-pentapeptide (lipid intermediate I) to form undecaprenyl-pyrophosphoryl-MurNAc-(pentapeptide)GlcNAc (lipid intermediate II). The polypeptide is UDP-N-acetylglucosamine--N-acetylmuramyl-(pentapeptide) pyrophosphoryl-undecaprenol N-acetylglucosamine transferase (Treponema denticola (strain ATCC 35405 / DSM 14222 / CIP 103919 / JCM 8153 / KCTC 15104)).